The primary structure comprises 198 residues: Elongation factor Ts (198 aa).

An involved in Mg(2+) ion dislocation from EF-Tu region spans residues 81-84 (TDFV).

It belongs to the EF-Ts family.

It localises to the cytoplasm. In terms of biological role, associates with the EF-Tu.GDP complex and induces the exchange of GDP to GTP. It remains bound to the aminoacyl-tRNA.EF-Tu.GTP complex up to the GTP hydrolysis stage on the ribosome. This Dictyoglomus thermophilum (strain ATCC 35947 / DSM 3960 / H-6-12) protein is Elongation factor Ts.